The sequence spans 469 residues: Aspartyl/glutamyl-tRNA(Asn/Gln) amidotransferase subunit B (469 aa).

The protein belongs to the GatB/GatE family. GatB subfamily. In terms of assembly, heterotrimer of A, B and C subunits.

The catalysed reaction is L-glutamyl-tRNA(Gln) + L-glutamine + ATP + H2O = L-glutaminyl-tRNA(Gln) + L-glutamate + ADP + phosphate + H(+). It catalyses the reaction L-aspartyl-tRNA(Asn) + L-glutamine + ATP + H2O = L-asparaginyl-tRNA(Asn) + L-glutamate + ADP + phosphate + 2 H(+). In terms of biological role, allows the formation of correctly charged Asn-tRNA(Asn) or Gln-tRNA(Gln) through the transamidation of misacylated Asp-tRNA(Asn) or Glu-tRNA(Gln) in organisms which lack either or both of asparaginyl-tRNA or glutaminyl-tRNA synthetases. The reaction takes place in the presence of glutamine and ATP through an activated phospho-Asp-tRNA(Asn) or phospho-Glu-tRNA(Gln). The polypeptide is Aspartyl/glutamyl-tRNA(Asn/Gln) amidotransferase subunit B (Methanococcus maripaludis (strain C6 / ATCC BAA-1332)).